We begin with the raw amino-acid sequence, 335 residues long: MKTQIINGVSLPNIPWQDKPADCKDVIWRYDANPIIPRDQLPTSNSIFNSAVVPYESEKGKFAGVFRVDDKCRNMELHAGFSKDGIHWDINPDRIVFEQAEKSTEEVNQWGYGYDPRVCFIEDRFWVTWCNAYGWKPTIGVAYTFDFKTFYQCENAFLPFNRNGVLFPRKINGKYVMFSRPSDSGHTPFGDMFISQSPDMKYWGEHRHVMGPLRAWESKKIGAGPIPIETSEGWLCFYHGVLESCNGFVYSFSACILDKDEPWKVKYRCAEYLLSPQKIYECVGDVQNVTFPCATLVDADTGRIAIYYGCADTCVSMAFTTVDDVVDYVKSHSSV.

It belongs to the glycosyl hydrolase 130 family. Homohexamer in solution.

It carries out the reaction [(1-&gt;4)-beta-D-mannosyl](n) + phosphate = [(1-&gt;4)-beta-D-mannosyl](n-1) + alpha-D-mannose 1-phosphate. Catalyzes the phosphorolysis of beta-1,4-mannooligosaccharides to mannose 1-phosphate (Man1P) and shorter mannooligosaccharides. Can also catalyze the phosphorolysis of 4-O-beta-D-mannopyranosyl-D-glucopyranose (Man-Glc), but shows higher activity toward longer mannooligosaccharides. Involved in a mannan catabolic pathway which feeds into glycolysis. This is Beta-1,4-mannooligosaccharide phosphorylase from Ruminococcus albus (strain ATCC 27210 / DSM 20455 / JCM 14654 / NCDO 2250 / 7).